Here is a 938-residue protein sequence, read N- to C-terminus: RIPOR family member 3 (938 aa).

A phosphoserine mark is found at Ser9, Ser24, and Ser340. Residue Thr345 is modified to Phosphothreonine. Phosphoserine occurs at positions 351 and 384. 2 disordered regions span residues 402 to 430 (EMDS…FLPV) and 579 to 603 (FGGS…SPSE).

The protein belongs to the RIPOR family.

This Mus musculus (Mouse) protein is RIPOR family member 3.